The sequence spans 246 residues: tRNA pseudouridine synthase A (246 aa).

Asp52 functions as the Nucleophile in the catalytic mechanism. Tyr111 provides a ligand contact to substrate.

This sequence belongs to the tRNA pseudouridine synthase TruA family. In terms of assembly, homodimer.

The catalysed reaction is uridine(38/39/40) in tRNA = pseudouridine(38/39/40) in tRNA. In terms of biological role, formation of pseudouridine at positions 38, 39 and 40 in the anticodon stem and loop of transfer RNAs. The polypeptide is tRNA pseudouridine synthase A (Borreliella burgdorferi (strain ZS7) (Borrelia burgdorferi)).